A 153-amino-acid polypeptide reads, in one-letter code: UPF0225 protein ETA_15740 (153 aa).

The protein belongs to the UPF0225 family.

The polypeptide is UPF0225 protein ETA_15740 (Erwinia tasmaniensis (strain DSM 17950 / CFBP 7177 / CIP 109463 / NCPPB 4357 / Et1/99)).